A 380-amino-acid chain; its full sequence is 1-deoxy-D-xylulose 5-phosphate reductoisomerase (380 aa).

8 residues coordinate NADPH: Thr10, Gly11, Ser12, Ile13, Gly36, Arg37, Asn38, and Asn120. A 1-deoxy-D-xylulose 5-phosphate-binding site is contributed by Lys121. Glu122 contacts NADPH. Residue Asp146 participates in Mn(2+) binding. The 1-deoxy-D-xylulose 5-phosphate site is built by Ser147, Glu148, Ser172, and His195. A Mn(2+)-binding site is contributed by Glu148. Position 201 (Gly201) interacts with NADPH. 4 residues coordinate 1-deoxy-D-xylulose 5-phosphate: Ser208, Asn213, Lys214, and Glu217. Glu217 serves as a coordination point for Mn(2+).

Belongs to the DXR family. It depends on Mg(2+) as a cofactor. Requires Mn(2+) as cofactor.

It carries out the reaction 2-C-methyl-D-erythritol 4-phosphate + NADP(+) = 1-deoxy-D-xylulose 5-phosphate + NADPH + H(+). The protein operates within isoprenoid biosynthesis; isopentenyl diphosphate biosynthesis via DXP pathway; isopentenyl diphosphate from 1-deoxy-D-xylulose 5-phosphate: step 1/6. Functionally, catalyzes the NADPH-dependent rearrangement and reduction of 1-deoxy-D-xylulose-5-phosphate (DXP) to 2-C-methyl-D-erythritol 4-phosphate (MEP). The chain is 1-deoxy-D-xylulose 5-phosphate reductoisomerase from Listeria monocytogenes serotype 4b (strain F2365).